The sequence spans 230 residues: uncharacterized protein (230 aa).

The disordered stretch occupies residues 118 to 195; sequence LLDEILPKEP…SKREMERLER (78 aa). Residues 136–146 show a composition bias toward basic residues; the sequence is QKKKEKRAALK. 2 stretches are compositionally biased toward basic and acidic residues: residues 160–170 and 179–195; these read ETDLYGDRDSF and QRSE…RLER.

This is an uncharacterized protein from Schizosaccharomyces pombe (strain 972 / ATCC 24843) (Fission yeast).